Consider the following 386-residue polypeptide: Prostacyclin receptor (386 aa).

The Extracellular segment spans residues methionine 1 to glycine 16. Cystine bridges form between cysteine 5–cysteine 165 and cysteine 92–cysteine 170. N-linked (GlcNAc...) asparagine glycosylation occurs at asparagine 7. A helical transmembrane segment spans residues proline 17–leucine 38. Residues serine 39–valine 51 are Cytoplasmic-facing. A helical membrane pass occupies residues leucine 52–alanine 76. Over arginine 77 to alanine 94 the chain is Extracellular. The helical transmembrane segment at phenylalanine 95–valine 115 threads the bilayer. The Cytoplasmic portion of the chain corresponds to glutamate 116–arginine 134. A helical membrane pass occupies residues cysteine 135 to leucine 158. The Extracellular portion of the chain corresponds to glycine 159–glycine 181. Residues alanine 182–leucine 208 form a helical membrane-spanning segment. The Cytoplasmic segment spans residues serine 209–valine 235. The helical transmembrane segment at aspartate 236–phenylalanine 260 threads the bilayer. Over threonine 261–aspartate 274 the chain is Extracellular. A helical transmembrane segment spans residues leucine 275–phenylalanine 295. At arginine 296 to cysteine 386 the chain is on the cytoplasmic side. Residues proline 322 to lysine 376 form a disordered region. The span at threonine 363–lysine 376 shows a compositional bias: polar residues. The residue at position 383 (cysteine 383) is a Cysteine methyl ester. A lipid anchor (S-farnesyl cysteine) is attached at cysteine 383. The propeptide at serine 384–cysteine 386 is removed in mature form.

It belongs to the G-protein coupled receptor 1 family. Interacts (non-isoprenylated C-terminus) with PDZK1. Post-translationally, isoprenylation does not influence ligand binding but is required for efficient coupling to the effectors adenylyl cyclase and phospholipase C.

The protein resides in the cell membrane. Receptor for prostacyclin (prostaglandin I2 or PGI2). The activity of this receptor is mediated by G(s) proteins which activate adenylate cyclase. This is Prostacyclin receptor (PTGIR) from Homo sapiens (Human).